The primary structure comprises 755 residues: Protein MTSS 1 (755 aa).

Positions 1–250 (MEAVIEKECS…EQVILDLKGS (250 aa)) constitute an IMD domain. Residues 108–155 (LQEQMEEWKKVANQLDKDHAKEYKKARQEIKKKSSDTLKLQKKAKKGR) are a coiled coil. Disordered stretches follow at residues 139 to 159 (KKSSDTLKLQKKAKKGRGDIQ) and 255 to 305 (SYQT…RSSN). Phosphothreonine is present on T258. Residues S261, S262, S271, and S322 each carry the phosphoserine modification. The disordered stretch occupies residues 327-351 (QDAFQSKSPSPMPPEAPNQLSNGFS). T425 is modified (phosphothreonine). Disordered stretches follow at residues 428 to 470 (RRKE…TRPG), 490 to 513 (DTQRSSRDSLQCSSGYSTQTTTPC), and 563 to 755 (QAKR…PRFS). Over residues 443–453 (TTASGPPAAAE) the composition is skewed to low complexity. T603 is modified (phosphothreonine). Residues 608–623 (PIPIKTPVIPVKTPTV) show a composition bias toward low complexity. 2 positions are modified to phosphoserine: S644 and S647. Polar residues predominate over residues 656 to 671 (GVTSMPSSMWSGQASV). The region spanning 727-744 (QGEDMLNAIRRGVKLKKT) is the WH2 domain.

This sequence belongs to the MTSS family. In terms of assembly, binds to actin. Binds to the cytoplasmic domain of receptor protein tyrosine phosphatase delta. As to expression, expressed in many tissues, including spleen, thymus, prostate, testis, uterus, colon, and peripheral blood.

The protein localises to the cytoplasm. It localises to the cytoskeleton. Functionally, may be related to cancer progression or tumor metastasis in a variety of organ sites, most likely through an interaction with the actin cytoskeleton. The sequence is that of Protein MTSS 1 from Homo sapiens (Human).